We begin with the raw amino-acid sequence, 189 residues long: MIINFKNHFLIAMPGLKDPLFKNSVIYMCKHDNNGAMGIIINKKIKNLTIQKILHQLKINIKSSNTLDFKNPVIIGGPILEDRGFILHTFKKKFTTSTHISNDLSITTSRDILEYIANLNNPKNILMALGHCIWKQHQLEQEIAKNIWLTTPADIDIIFNTPISEKWKKSMYSIGIMNILQLTSEIGHA.

This sequence belongs to the UPF0301 (AlgH) family.

The sequence is that of UPF0301 protein bbp_491 from Buchnera aphidicola subsp. Baizongia pistaciae (strain Bp).